Here is a 135-residue protein sequence, read N- to C-terminus: Large ribosomal subunit protein mL41A (135 aa).

Residues 1–13 (MGLISKIARGLVR) constitute a mitochondrion transit peptide.

The protein belongs to the mitochondrion-specific ribosomal protein mL41 family. Component of the mitochondrial ribosome large subunit (39S) which comprises a 16S rRNA and about 50 distinct proteins.

The protein resides in the mitochondrion. Its function is as follows. Component of the mitochondrial ribosome large subunit. Also involved in apoptosis and cell cycle. This is Large ribosomal subunit protein mL41A (mrpl41-a) from Xenopus laevis (African clawed frog).